A 332-amino-acid chain; its full sequence is Serpentine receptor class gamma-3 (332 aa).

The next 7 membrane-spanning stretches (helical) occupy residues Phe23–Ser43, Leu72–Val92, Ile101–Ala121, Ile144–Asp164, Trp184–Val204, Ala231–Phe251, and Tyr263–Val283.

It belongs to the nematode receptor-like protein srg family.

It localises to the membrane. This Caenorhabditis elegans protein is Serpentine receptor class gamma-3 (srg-3).